The primary structure comprises 339 residues: Glucokinase (339 aa).

16–21 (GDIGGT) is a binding site for ATP.

Belongs to the bacterial glucokinase family.

It localises to the cytoplasm. The catalysed reaction is D-glucose + ATP = D-glucose 6-phosphate + ADP + H(+). The polypeptide is Glucokinase (Sinorhizobium fredii (strain NBRC 101917 / NGR234)).